A 142-amino-acid chain; its full sequence is Large ribosomal subunit protein mL42 (142 aa).

The N-terminal 31 residues, 1–31 (MAAAVKWAISNRTIWKHLLPIQNGALSSACH), are a transit peptide targeting the mitochondrion.

This sequence belongs to the mitochondrion-specific ribosomal protein mL42 family. As to quaternary structure, component of the mitochondrial ribosome large subunit (39S) which comprises a 16S rRNA and about 50 distinct proteins. Component of the mitochondrial ribosome small subunit (28S) which comprises a 12S rRNA and about 30 distinct proteins.

Its subcellular location is the mitochondrion. This is Large ribosomal subunit protein mL42 (Mrpl42) from Mus musculus (Mouse).